The chain runs to 483 residues: MSEISVLAIVSEIFPLIKTGGLADVAGALPAALAGEGIEVATLVPGYPAVMAQIEYAETVIDARPLYGAPARVLRGSAAGLDLFVLDAPHLYDRPGNPYLLPDGRDFPDNPFRFAALCQTGSALGFGAAPGFLPDIVHAHDWQAGLAAAYLHYDGRERPGTVATIHNLAFQGKYPAELLGALGLPPQAFSLEGVEYYGTIGFLKAALALSDRITTVSPTYAAEIRTPEHGMGLDGLLRTRAERLIGILNGIDDEVWDPSSDPLITEPFDVETLARRPANKAALQDKFGLDPDPGALLLGVVSRLSWQKGLDLLLANLDLLERLGVQLAVLGSGEPELVRQLLEAAEARPGRVGAVIGYDEAIAHRIQAGADAIVIPSRFEPCGLTQLCALRYGALPIVARVGGLADTIIDANEMALASGIGTGLQFSPPTADMLGATLERAARLWAEPEIWDELIENGMLTDVSWRRPAALYAKLFRDLVRER.

Residue lysine 18 coordinates ADP-alpha-D-glucose.

Belongs to the glycosyltransferase 1 family. Bacterial/plant glycogen synthase subfamily.

The enzyme catalyses [(1-&gt;4)-alpha-D-glucosyl](n) + ADP-alpha-D-glucose = [(1-&gt;4)-alpha-D-glucosyl](n+1) + ADP + H(+). Its pathway is glycan biosynthesis; glycogen biosynthesis. Its function is as follows. Synthesizes alpha-1,4-glucan chains using ADP-glucose. The chain is Glycogen synthase from Methylocella silvestris (strain DSM 15510 / CIP 108128 / LMG 27833 / NCIMB 13906 / BL2).